Reading from the N-terminus, the 262-residue chain is Glycerol uptake facilitator protein (262 aa).

The Cytoplasmic portion of the chain corresponds to 1–7 (MNFCSKK). Residues 8 to 36 (KILKQCFFEFLGTGLIIFLGISSLVVSKL) form a helical membrane-spanning segment. Topologically, residues 37 to 41 (TNFHF) are extracellular. Residues 42-62 (NHCEISCIWGLGVFISICFCS) form a helical membrane-spanning segment. Residues 63–65 (SVS) are Cytoplasmic-facing. An intramembrane segment occupies 66-69 (GAHL). An NPA 1 motif is present at residues 70–72 (NPA). Residues 70–80 (NPAITIFLFLS) constitute an intramembrane region (helical). The Cytoplasmic segment spans residues 81-86 (SQFNKK). A helical transmembrane segment spans residues 87–110 (KVIPYILSQISGTFFFTFLIYLIF). The Extracellular portion of the chain corresponds to 111-145 (NNLLNSFESKYNIVRGTKKSLELASLFCVFPKENY). Residues 146-171 (NFIHDFILEILIGIIFIIILMKLSEK) traverse the membrane as a helical segment. Over 172–180 (NNLFKFYKF) the chain is Cytoplasmic. A helical transmembrane segment spans residues 181-197 (INPFLIGTLVIIINLFL). The Extracellular portion of the chain corresponds to 198 to 201 (TSYS). The stretch at 202–205 (NITL) is an intramembrane region. The short motif at 206 to 208 (NPA) is the NPA 2 element. The helical intramembrane region spans 206 to 219 (NPARDLGPRIFLSL). Over 220 to 234 (IGWGKLAFTGDDNII) the chain is Extracellular. A helical membrane pass occupies residues 235-259 (FPYFLIPTIAPIIGINLGGWIYILY). The Cytoplasmic portion of the chain corresponds to 260–262 (IKK).

Belongs to the MIP/aquaporin (TC 1.A.8) family.

The protein resides in the cell membrane. The enzyme catalyses glycerol(in) = glycerol(out). In terms of biological role, mediates glycerol diffusion across the cytoplasmic membrane via a pore-type mechanism. The protein is Glycerol uptake facilitator protein (glpF) of Buchnera aphidicola subsp. Schizaphis graminum (strain Sg).